Here is a 501-residue protein sequence, read N- to C-terminus: ATP synthase subunit alpha (501 aa).

An ATP-binding site is contributed by 169–176; that stretch reads GDRQTGKT.

The protein belongs to the ATPase alpha/beta chains family. In terms of assembly, F-type ATPases have 2 components, CF(1) - the catalytic core - and CF(0) - the membrane proton channel. CF(1) has five subunits: alpha(3), beta(3), gamma(1), delta(1), epsilon(1). CF(0) has three main subunits: a(1), b(2) and c(9-12). The alpha and beta chains form an alternating ring which encloses part of the gamma chain. CF(1) is attached to CF(0) by a central stalk formed by the gamma and epsilon chains, while a peripheral stalk is formed by the delta and b chains.

It localises to the cell inner membrane. The enzyme catalyses ATP + H2O + 4 H(+)(in) = ADP + phosphate + 5 H(+)(out). Functionally, produces ATP from ADP in the presence of a proton gradient across the membrane. The alpha chain is a regulatory subunit. This is ATP synthase subunit alpha from Campylobacter lari (strain RM2100 / D67 / ATCC BAA-1060).